The following is a 290-amino-acid chain: O-methyltransferase agiB (290 aa).

Asp155 serves as a coordination point for S-adenosyl-L-methionine. The active-site Proton acceptor is the His194.

Belongs to the class I-like SAM-binding methyltransferase superfamily. Cation-independent O-methyltransferase family.

It functions in the pathway secondary metabolite biosynthesis. Its function is as follows. O-methyltransferase; part of the gene cluster that mediates the biosynthesis of the aspergillicins A and F, 2 cryptic cyclic hexa-depsipeptides. The hexamodular NRPS agiA catalyzes the condensation of the six amino acid residues including N-Me-L-O-Me-tyrosine, L-proline 1, L-proline 2, D-isoleucine, O-acetyl-threonine, and L-isoleucine. The starting condensation domain (C1) of agiA probably loads acetyl-CoA which is condensed on the N-terminus of threonine by the first module to yield O-acetyl-threonine. The second module then loads L-isoleucine. The epimerase (E) domain on module 2 is probably involved in the formation of the D-isoleucine moiety. Modules 3 and 4 further load 2 successive L-prolines. Module 5 is then involved in the condensation of O-Me-L-tyrosine produced by the O-methyltransferase agiB and the N-methyl transferase (NMeT) domain on module 5 probably catalyzes the N-methylation to yield the N-Me-L-O-Me-tyrosine moiety. The A domain of module 5 loads preferentially O-Me-L-tyrosine, but it can also accept L-phenylalanine, which leads to the production of aspergillicin G. Module 6 then loads the last residue, L-isoleucine. The C-terminal thiolesterase (TE) domain probably cyclizes the peptide using the hydroxy group from threonine to form the cyclic depsipeptide. The sequence is that of O-methyltransferase agiB from Aspergillus flavus (strain ATCC 200026 / FGSC A1120 / IAM 13836 / NRRL 3357 / JCM 12722 / SRRC 167).